Reading from the N-terminus, the 241-residue chain is Dephospho-CoA kinase CAB5 (241 aa).

A DPCK domain is found at 3-211 (VVGLTGGIAC…PSKLRTVLEY (209 aa)). 8 to 15 (GGIACGKS) contributes to the ATP binding site.

Belongs to the CoaE family.

Its subcellular location is the endoplasmic reticulum. The protein resides in the mitochondrion. It localises to the nucleus. It catalyses the reaction 3'-dephospho-CoA + ATP = ADP + CoA + H(+). It participates in cofactor biosynthesis; coenzyme A biosynthesis; CoA from (R)-pantothenate: step 5/5. Its function is as follows. Catalyzes the phosphorylation of the 3'-hydroxyl group of dephosphocoenzyme A to form coenzyme A. The polypeptide is Dephospho-CoA kinase CAB5 (CAB5) (Saccharomyces cerevisiae (strain ATCC 204508 / S288c) (Baker's yeast)).